Here is a 315-residue protein sequence, read N- to C-terminus: CID domain-containing protein 1 (315 aa).

Positions 1–135 (MADFTEQTLR…RLHEVHQQVK (135 aa)) constitute a CID domain. The stretch at 227–273 (MLEEYVKRLKNETNERETLESNLNMLIENVRMSIEHHEKLCREVKRR) forms a coiled coil.

This is CID domain-containing protein 1 (cids-1) from Caenorhabditis elegans.